The following is a 313-amino-acid chain: Acetyl-coenzyme A carboxylase carboxyl transferase subunit beta (313 aa).

The region spanning 24-293 is the CoA carboxyltransferase N-terminal domain; sequence LWIKCPDSGQ…LETASKSVQP (270 aa).

Belongs to the AccD/PCCB family. Acetyl-CoA carboxylase is a heterohexamer composed of biotin carboxyl carrier protein (AccB), biotin carboxylase (AccC) and two subunits each of ACCase subunit alpha (AccA) and ACCase subunit beta (AccD).

Its subcellular location is the cytoplasm. The catalysed reaction is N(6)-carboxybiotinyl-L-lysyl-[protein] + acetyl-CoA = N(6)-biotinyl-L-lysyl-[protein] + malonyl-CoA. Its pathway is lipid metabolism; malonyl-CoA biosynthesis; malonyl-CoA from acetyl-CoA: step 1/1. In terms of biological role, component of the acetyl coenzyme A carboxylase (ACC) complex. Biotin carboxylase (BC) catalyzes the carboxylation of biotin on its carrier protein (BCCP) and then the CO(2) group is transferred by the transcarboxylase to acetyl-CoA to form malonyl-CoA. This chain is Acetyl-coenzyme A carboxylase carboxyl transferase subunit beta, found in Bradyrhizobium diazoefficiens (strain JCM 10833 / BCRC 13528 / IAM 13628 / NBRC 14792 / USDA 110).